The chain runs to 906 residues: Protein translocase subunit SecA (906 aa).

ATP is bound by residues Gln86, 104–108 (GEGKT), and Asp499. The segment at 862–887 (KPVVSRIDPKDRNPDDPTSWGRVSRN) is disordered. 4 residues coordinate Zn(2+): Cys890, Cys892, Cys901, and His902.

Belongs to the SecA family. As to quaternary structure, monomer and homodimer. Part of the essential Sec protein translocation apparatus which comprises SecA, SecYEG and auxiliary proteins SecDF-YajC and YidC. It depends on Zn(2+) as a cofactor.

The protein localises to the cell inner membrane. It localises to the cytoplasm. The enzyme catalyses ATP + H2O + cellular proteinSide 1 = ADP + phosphate + cellular proteinSide 2.. Its function is as follows. Part of the Sec protein translocase complex. Interacts with the SecYEG preprotein conducting channel. Has a central role in coupling the hydrolysis of ATP to the transfer of proteins into and across the cell membrane, serving both as a receptor for the preprotein-SecB complex and as an ATP-driven molecular motor driving the stepwise translocation of polypeptide chains across the membrane. The chain is Protein translocase subunit SecA from Rickettsia peacockii (strain Rustic).